Reading from the N-terminus, the 558-residue chain is Zinc finger protein piragua (558 aa).

One can recognise a ZAD domain in the interval 15 to 94 (STCRLCHHNT…QEREQSLQEQ (80 aa)). The Zn(2+) site is built by Cys17, Cys20, Cys67, and Cys70. The span at 132 to 177 (LAESSEEEFALGSDGEYENYDDDDEEEEEDYDEEDEEDGQNGEDVD) shows a compositional bias: acidic residues. The disordered stretch occupies residues 132–178 (LAESSEEEFALGSDGEYENYDDDDEEEEEDYDEEDEEDGQNGEDVDM). C2H2-type zinc fingers lie at residues 208 to 231 (FLCQ…LAAH), 237 to 260 (YCCN…KTLH), 266 to 288 (YVCA…TIVH), 294 to 316 (FTCN…MRIH), 322 to 344 (FVCQ…TRSH), 350 to 372 (FQCG…QQVH), 414 to 436 (YHCD…QALH), 441 to 464 (FACK…LEAH), and 468 to 490 (FTCG…LKVH).

In terms of biological role, may be involved in transcriptional regulation. The function of this protein is unclear. According to one report, it is required for development and viability since mutants display defects in several developmental morphogenetic processes including dorsal closure and head involution, and die by the first instar larval stage. It may also be involved in fwe-mediated cellular competition. However, according to another report, it is not required for development or viability since mutants have no visible phenotype and are fertile. The protein is Zinc finger protein piragua of Drosophila melanogaster (Fruit fly).